The following is a 508-amino-acid chain: MEFSPRAAELTTLLESRMINFYTNLKVDEIGRVVSVGDGIARVYGLNEIQAGEMVEFASGVKGIALNLENENVGIVVFGSDTAIKEGDLVKRTGSIVDVPAGKAMLGRVVDALGVPIDGKGALSDHERRRVEVKAPGIIERKSVHEPMQTGLKAVDSLVPIGRGQRELIIGDRQTGKTAIAIDTILNQKQMNSRGTNESETLYCVYVAIGQKRSTVAQLVQILSEANALEYSMLVAATASDPAPLQFLAPYSGCAMGEYFRDNGMHALIIYDDLSKQAVAYRQMSLLLRRPPGREAFPGDVFYLHSRLLERAAKRSDQTGAGSLTALPVIETQAGDVSAYIPTNVISITDGQICLETELFYRGIRPAINVGLSVSRVGSAAQLKAMKQVCGSSKLELAQYREVAAFAQFGSDLDAATQALLNRGARLTEVPKQPQYEPLPIEKQIVVIYAAVNGFCDRMPLDRISQYEKNILSTINPELLKSFLEKGGLTNERKMEPDASLKESALNL.

171 to 178 (GDRQTGKT) is a binding site for ATP.

This sequence belongs to the ATPase alpha/beta chains family. As to quaternary structure, F-type ATPases have 2 components, CF(1) - the catalytic core - and CF(0) - the membrane proton channel. CF(1) has five subunits: alpha(3), beta(3), gamma(1), delta(1), epsilon(1). CF(0) has three main subunits: a, b and c.

Its subcellular location is the mitochondrion. It localises to the mitochondrion inner membrane. Its function is as follows. Mitochondrial membrane ATP synthase (F(1)F(0) ATP synthase or Complex V) produces ATP from ADP in the presence of a proton gradient across the membrane which is generated by electron transport complexes of the respiratory chain. F-type ATPases consist of two structural domains, F(1) - containing the extramembraneous catalytic core, and F(0) - containing the membrane proton channel, linked together by a central stalk and a peripheral stalk. During catalysis, ATP synthesis in the catalytic domain of F(1) is coupled via a rotary mechanism of the central stalk subunits to proton translocation. Subunits alpha and beta form the catalytic core in F(1). Rotation of the central stalk against the surrounding alpha(3)beta(3) subunits leads to hydrolysis of ATP in three separate catalytic sites on the beta subunits. Subunit alpha does not bear the catalytic high-affinity ATP-binding sites. The chain is ATP synthase subunit alpha, mitochondrial (ATPA) from Zea mays (Maize).